Consider the following 370-residue polypeptide: Serine O-succinyltransferase (370 aa).

In terms of domain architecture, AB hydrolase-1 spans 46 to 355 (AILIVTGLSP…PQGHDAFLVD (310 aa)). The interval 52 to 55 (GLSP) is important for substrate specificity. Ser149 functions as the Nucleophile in the catalytic mechanism. Arg218 contacts substrate. Residues Asp316 and His349 contribute to the active site. Substrate is bound at residue Asp350.

The protein belongs to the AB hydrolase superfamily. MetX family. Homodimer.

It is found in the cytoplasm. The catalysed reaction is succinyl-CoA + L-serine = O-succinyl-L-serine + CoA. It catalyses the reaction L-homoserine + succinyl-CoA = O-succinyl-L-homoserine + CoA. It functions in the pathway amino-acid biosynthesis; L-cysteine biosynthesis; L-cysteine from L-serine: step 1/2. Functionally, transfers a succinyl group from succinyl-CoA to L-serine, forming succinyl-L-serine. In vitro, also has homoserine succinyl transferase activity. The chain is Serine O-succinyltransferase from Stenotrophomonas maltophilia (Pseudomonas maltophilia).